The primary structure comprises 282 residues: Acetylglutamate kinase (282 aa).

Substrate contacts are provided by residues Gly-62–Gly-63, Arg-84, and Asn-178.

Belongs to the acetylglutamate kinase family. ArgB subfamily.

It is found in the cytoplasm. It catalyses the reaction N-acetyl-L-glutamate + ATP = N-acetyl-L-glutamyl 5-phosphate + ADP. It participates in amino-acid biosynthesis; L-arginine biosynthesis; N(2)-acetyl-L-ornithine from L-glutamate: step 2/4. Catalyzes the ATP-dependent phosphorylation of N-acetyl-L-glutamate. The chain is Acetylglutamate kinase from Kosmotoga olearia (strain ATCC BAA-1733 / DSM 21960 / TBF 19.5.1).